The sequence spans 361 residues: Uroporphyrinogen decarboxylase (361 aa).

Substrate-binding positions include 44-48 (RQAGR), Asp93, Tyr168, Ser223, and His337.

It belongs to the uroporphyrinogen decarboxylase family. As to quaternary structure, homodimer.

It is found in the cytoplasm. The catalysed reaction is uroporphyrinogen III + 4 H(+) = coproporphyrinogen III + 4 CO2. The protein operates within porphyrin-containing compound metabolism; protoporphyrin-IX biosynthesis; coproporphyrinogen-III from 5-aminolevulinate: step 4/4. In terms of biological role, catalyzes the decarboxylation of four acetate groups of uroporphyrinogen-III to yield coproporphyrinogen-III. The sequence is that of Uroporphyrinogen decarboxylase from Thermobifida fusca (strain YX).